The chain runs to 669 residues: Dynamin-related protein 4C (669 aa).

The segment at 1 to 21 (MVKKKVATKKNSPSLAIAKKK) is disordered. In terms of domain architecture, Dynamin-type G spans 62–323 (GIHLPTIVVV…QSSMIARCLP (262 aa)). Residues 72–79 (GDQSSGKS) are G1 motif. Position 72–79 (72–79 (GDQSSGKS)) interacts with GTP. Residues 97–99 (CTR) are G2 motif. The interval 171-174 (DLPG) is G3 motif. Residues 171-175 (DLPGI) and 240-243 (TKAD) contribute to the GTP site. A G4 motif region spans residues 240-243 (TKAD). Glutamate 273 is a region of interest (G5 motif). The 95-residue stretch at 575 to 669 (AFDMKMRITS…AVAAIVDQNC (95 aa)) folds into the GED domain.

Belongs to the TRAFAC class dynamin-like GTPase superfamily. Dynamin/Fzo/YdjA family.

The protein localises to the cytoplasm. It localises to the cytoskeleton. Putative microtubule-associated force-producing protein, able to bind and hydrolyze GTP. The polypeptide is Dynamin-related protein 4C (DRP4C) (Arabidopsis thaliana (Mouse-ear cress)).